Here is a 746-residue protein sequence, read N- to C-terminus: Protein C-mannosyl-transferase DPY19L1 (746 aa).

The tract at residues 1–68 is disordered; that stretch reads MVLQARSKHR…RAETAAPAPD (68 aa). Pro residues predominate over residues 14 to 27; sequence PRPPRPARSSPPPL. Transmembrane regions (helical) follow at residues 93-113, 139-159, 227-247, 248-268, 308-328, 329-349, 357-377, 378-398, 405-425, 481-501, 520-540, and 562-582; these read STLLLASFAALLHWSHITQLF, YSYFKTIVEAPSFLSGVWMIM, ACFYVAVIFMLNGLMMALFFI, YGTYLSGSRLGGLVTVLCFFF, YRGSLIALCISNVFFMLPWQF, AQFVLLTQIASLFAVYVVGYI, IIYTHMISLVLCFVLMFGNSM, LLTSYYASSLVIIWGMLAMKP, VSELSLWVIQGCCWLFGTVTL, LLLPVVLAIVAAIGRKIINDM, GELVYHALQLFAYTALGILIM, and LFGWLFGKVHPGAVVFAVLAA.

It belongs to the dpy-19 family.

The protein resides in the endoplasmic reticulum membrane. The catalysed reaction is L-tryptophyl-[protein] + a di-trans,poly-cis-dolichyl beta-D-mannosyl phosphate = C-alpha-D-mannosyl-L-tryptophyl-[protein] + a di-trans,poly-cis-dolichyl phosphate + H(+). The protein operates within protein modification; protein glycosylation. In terms of biological role, C-mannosyltransferase that mediates the C-mannosylation tryptophan residues on target proteins. The reaction occurs on the luminal side of the endoplasmic reticulum and involves the transfer of a mannose unit from a dolichylphosphate mannose (Dol-P-Man) donor to an acceptor protein containing a WxxW consensus sequence. C-mannosylates the first two tryptophans in the WxxWxxWxxC sequence motif in thrombospondin (TSP) type-1 repeats of UNC5A. Regulates neurite extension during development. This Rattus norvegicus (Rat) protein is Protein C-mannosyl-transferase DPY19L1 (Dpy19l1).